Consider the following 188-residue polypeptide: Adenine phosphoribosyltransferase (188 aa).

The protein belongs to the purine/pyrimidine phosphoribosyltransferase family. In terms of assembly, homodimer.

Its subcellular location is the cytoplasm. The enzyme catalyses AMP + diphosphate = 5-phospho-alpha-D-ribose 1-diphosphate + adenine. Its pathway is purine metabolism; AMP biosynthesis via salvage pathway; AMP from adenine: step 1/1. In terms of biological role, catalyzes a salvage reaction resulting in the formation of AMP, that is energically less costly than de novo synthesis. The polypeptide is Adenine phosphoribosyltransferase (Salinispora tropica (strain ATCC BAA-916 / DSM 44818 / JCM 13857 / NBRC 105044 / CNB-440)).